The following is a 35-amino-acid chain: Photosystem II reaction center protein T (35 aa).

Residues 3-23 (ALVYTFLLVSTLGIIFFAIFF) form a helical membrane-spanning segment.

This sequence belongs to the PsbT family. PSII is composed of 1 copy each of membrane proteins PsbA, PsbB, PsbC, PsbD, PsbE, PsbF, PsbH, PsbI, PsbJ, PsbK, PsbL, PsbM, PsbT, PsbY, PsbZ, Psb30/Ycf12, at least 3 peripheral proteins of the oxygen-evolving complex and a large number of cofactors. It forms dimeric complexes.

Its subcellular location is the plastid. It localises to the chloroplast thylakoid membrane. Found at the monomer-monomer interface of the photosystem II (PS II) dimer, plays a role in assembly and dimerization of PSII. PSII is a light-driven water plastoquinone oxidoreductase, using light energy to abstract electrons from H(2)O, generating a proton gradient subsequently used for ATP formation. The sequence is that of Photosystem II reaction center protein T from Cedrus deodara (Deodar cedar).